Consider the following 249-residue polypeptide: MAAKDRLPIFPSRGAQTLMKSRLAGATKGHGLLKKKADALQMRFRLILGKIIETKTLMGQVMKEAAFSLAEVKFTTGDINQIVLQNVTKAQIKIRTKKDNVAGVTLPIFEPYTDGVDTYELAGLARGGQQLAKLKKNYQSAVRLLVQLASLQTSFVTLDDVIKVTNRRVNAIEHVIIPRINRTIEYIISELDELEREEFYRLKKIQDKKREARKASDKLRAEQRLLGQMAEAQEVQNILDEDGDEDLLF.

It belongs to the V-ATPase D subunit family. V-ATPase is a heteromultimeric enzyme made up of two complexes: the ATP-hydrolytic V1 complex and the proton translocation V0 complex. The V1 complex consists of three catalytic AB heterodimers that form a heterohexamer, three peripheral stalks each consisting of EG heterodimers, one central rotor including subunits D and F, and the regulatory subunits C and H. The proton translocation complex V0 consists of the proton transport subunit a, a ring of proteolipid subunits c9c'', rotary subunit d, subunits e and f, and the accessory subunits VhaAC45 and ATP6AP2.

Functionally, subunit of the V1 complex of vacuolar(H+)-ATPase (V-ATPase), a multisubunit enzyme composed of a peripheral complex (V1) that hydrolyzes ATP and a membrane integral complex (V0) that translocates protons. V-ATPase is responsible for acidifying and maintaining the pH of intracellular compartments and in some cell types, is targeted to the plasma membrane, where it is responsible for acidifying the extracellular environment. The sequence is that of V-type proton ATPase subunit D 2 (Vha36-3) from Drosophila melanogaster (Fruit fly).